A 349-amino-acid polypeptide reads, in one-letter code: Aminomethyltransferase (349 aa).

It belongs to the GcvT family. As to quaternary structure, the glycine cleavage system is composed of four proteins: P, T, L and H.

The catalysed reaction is N(6)-[(R)-S(8)-aminomethyldihydrolipoyl]-L-lysyl-[protein] + (6S)-5,6,7,8-tetrahydrofolate = N(6)-[(R)-dihydrolipoyl]-L-lysyl-[protein] + (6R)-5,10-methylene-5,6,7,8-tetrahydrofolate + NH4(+). The glycine cleavage system catalyzes the degradation of glycine. This Thermus thermophilus (strain ATCC BAA-163 / DSM 7039 / HB27) protein is Aminomethyltransferase.